We begin with the raw amino-acid sequence, 300 residues long: MPSKKSSSPLSVEKLHRSEPLELNGATLFEGDALSVLRRLPSGSVRCIVTSPPYWGLRDYGIDEQIGLESSMTQFLNRLVTIFSEAKRVLTDDGTLWVNIGDGYTSGNRGYRAPDKKNPARAMAVRPDTPEGLKPKDLIGIPWRLAFALQEDGWYLRSDIVWNKPNAMPESVKDRPTRSHEFLFMLTKSEKYYYDWEAVREEKDSGGFRNRRTVWNVNTKPFAGAHFATFPTELIRPCILASTKPGDYVLDPFFGSGTVGVVCQQEDRQYVGIELNPEYVDIAVNRLQGEDTNVIRIAAA.

The segment at 109–129 is disordered; the sequence is RGYRAPDKKNPARAMAVRPDT.

Belongs to the N(4)/N(6)-methyltransferase family. N(4) subfamily.

It carries out the reaction a 2'-deoxycytidine in DNA + S-adenosyl-L-methionine = an N(4)-methyl-2'-deoxycytidine in DNA + S-adenosyl-L-homocysteine + H(+). Functionally, a beta subtype methylase, recognizes the double-stranded sequence 5'-CCCGGG-3', methylates C-2 on both strands, and protects the DNA from cleavage by the Cfr9I endonuclease. The protein is Type II methyltransferase M.Cfr9I of Citrobacter freundii.